The chain runs to 583 residues: NudC domain-containing protein 1 (583 aa).

The residue at position 8 (Ser-8) is a Phosphoserine. The CS domain maps to 273–361 (IKEPLYYWQQ…NEGLTWPELV (89 aa)). Residue Ser-388 is modified to Phosphoserine.

Isoform 1 is specifically expressed in leukemias and a variety of solid tumor cell lines and is also detected in testis and heart. Isoform 2 is predominantly expressed in testis and weakly expressed in tumor cells.

The protein resides in the cytoplasm. It is found in the nucleus. This Homo sapiens (Human) protein is NudC domain-containing protein 1.